A 134-amino-acid polypeptide reads, in one-letter code: Small ribosomal subunit protein uS9c (134 aa).

The protein belongs to the universal ribosomal protein uS9 family.

It is found in the plastid. Its subcellular location is the chloroplast. The chain is Small ribosomal subunit protein uS9c (rps9) from Guillardia theta (Cryptophyte).